Reading from the N-terminus, the 360-residue chain is BLOC-1-related complex subunit 6 (360 aa).

Over residues 1–10 the composition is skewed to basic and acidic residues; it reads MEAARGRLGP. The segment at 1 to 201 is disordered; the sequence is MEAARGRLGP…AGAGGGRRAT (201 aa). Residues 23–35 are compositionally biased toward polar residues; sequence VTFSGRPSRTLSK. Threonine 41 bears the Phosphothreonine mark. Residues 71-83 show a composition bias toward basic and acidic residues; that stretch reads HRPELDTWEDKPS. The span at 89–100 shows a compositional bias: low complexity; that stretch reads SGARGSRGTSGS. A Phosphoserine modification is found at serine 130. The segment covering 144–156 has biased composition (acidic residues); sequence EGDDDDDGDDEEA. Phosphoserine is present on serine 173. The segment covering 179 to 198 has biased composition (gly residues); it reads GACGGGGSSSSGEAGAGGGR. Phosphothreonine is present on threonine 201. Serine 204 is modified (phosphoserine).

This sequence belongs to the BORCS6 family. As to quaternary structure, component of the BLOC-one-related complex (BORC) which is composed of BLOC1S1, BLOC1S2, BORCS5, BORCS6, BORCS7, BORCS8, KXD1 and SNAPIN.

Its subcellular location is the lysosome membrane. As part of the BORC complex may play a role in lysosomes movement and localization at the cell periphery. Associated with the cytosolic face of lysosomes, the BORC complex may recruit ARL8B and couple lysosomes to microtubule plus-end-directed kinesin motor. The sequence is that of BLOC-1-related complex subunit 6 from Rattus norvegicus (Rat).